We begin with the raw amino-acid sequence, 881 residues long: Probable alpha/beta-glucosidase agdC (881 aa).

The signal sequence occupies residues 1-14 (MLRSLLLLAPLVGA). Residues asparagine 171, asparagine 293, and asparagine 373 are each glycosylated (N-linked (GlcNAc...) asparagine). The Nucleophile role is filled by aspartate 422. Glutamate 425 is a catalytic residue. Positions 440 to 485 (YSRDNDLPPAAPPVRPSNPRPLPGFPGDFQPSSSSKRSTKGSKVGL) are disordered. The span at 448–463 (PAAPPVRPSNPRPLPG) shows a compositional bias: pro residues. N-linked (GlcNAc...) asparagine glycosylation occurs at asparagine 506. Aspartate 571 functions as the Proton donor in the catalytic mechanism. N-linked (GlcNAc...) asparagine glycosylation is found at asparagine 572, asparagine 608, and asparagine 742.

It belongs to the glycosyl hydrolase 31 family.

The protein localises to the secreted. The catalysed reaction is Hydrolysis of terminal, non-reducing (1-&gt;4)-linked alpha-D-glucose residues with release of alpha-D-glucose.. It carries out the reaction Hydrolysis of terminal, non-reducing beta-D-glucosyl residues with release of beta-D-glucose.. Glucosidase involved in the degradation of cellulosic biomass. Has both alpha- and beta-glucosidase activity. In Neosartorya fischeri (strain ATCC 1020 / DSM 3700 / CBS 544.65 / FGSC A1164 / JCM 1740 / NRRL 181 / WB 181) (Aspergillus fischerianus), this protein is Probable alpha/beta-glucosidase agdC (agdC).